We begin with the raw amino-acid sequence, 580 residues long: MERKQKNSLFNYIYSLMDVRGKFLFFSMLFITSLSSIIISISPLILAKITDLLSGSLSNFSYEYLVLLACLYMFCVISNKASVFLFMILQSSLRINMQKKMSLKYLRELYNENITNLSKNNAGYTTQSLNQASNDIYILVRNVSQNILSPVIQLISTIVVVLSTKDWFSAGVFFLYILVFVIFNTRLTGSLASLRKHSMDITLNSYSLLSDTVDNMIAAKKNNALRLISERYEDALTQENNAQKKYWLLSSKVLLLNSLLAVILFGSVFIYNILGVLNGVVSIGHFIMITSYIILLSTPVENIGALLSEIRQSMSSLAGFIQRHAENKATSPSIPFLNMERKLNLSIRELSFSYSDDKKILNSVSLDLFTGKMYSLTGPSGSGKSTLVKIISGYYKNYFGDIYLNDISLRNISDEDLNDAIYYLTQDDYIFMDTLRFNLRLANYDASENEIFKVLKLANLSVVNNEPVSLDTHLINRGNNYSGGQKQRISLARLFLRKPAIIIIDEATSALDYINESEILSSIRTHFPDALIINISHRINLLECSDCVYVLNEGNIVASGHFRDLMVSNEYISGLASVTE.

A run of 6 helical transmembrane segments spans residues Phe-25 to Ile-45, Val-66 to Phe-86, Val-143 to Ser-163, Trp-167 to Leu-187, Ala-261 to Val-281, and Phe-286 to Leu-306. The 288-residue stretch at Phe-25 to Gln-312 folds into the ABC transmembrane type-1 domain. The ABC transporter domain maps to Leu-345 to Val-578. Residue Gly-378–Ser-385 coordinates ATP.

This sequence belongs to the ABC transporter superfamily. Homodimer.

It is found in the cell inner membrane. In terms of biological role, is able to protect a cell, which harbors the plasmid pTUC100 encoding microcin J25, against microcin J25. Is required for microcin J25 export out of the producing cells. The sequence is that of Microcin-J25 export ATP-binding/permease protein McjD (mcjD) from Escherichia coli.